A 768-amino-acid chain; its full sequence is Photosystem I P700 chlorophyll a apoprotein A1 (768 aa).

8 consecutive transmembrane segments (helical) span residues 76–99 (VFSA…FHGA), 162–185 (LMAL…YHYH), 201–225 (LNHH…HIGA), 310–328 (ISHH…GHLY), 369–392 (WHAQ…HHMY), 408–434 (LGLF…IAMI), 456–478 (ALIS…LYIH), and 559–577 (FMIH…LILL). [4Fe-4S] cluster-binding residues include C601 and C610. 2 helical membrane passes run 617–638 (HVFL…HFSW) and 682–704 (ISMY…MFLF). H693 contributes to the divinylchlorophyll a' binding site. Residues M701 and Y709 each contribute to the divinyl chlorophyll a site. A phylloquinone-binding site is contributed by W710. The helical transmembrane segment at 742 to 762 (AVGAAHFLLGGIATTWAFFHA) threads the bilayer.

It belongs to the PsaA/PsaB family. As to quaternary structure, the PsaA/B heterodimer binds the P700 divinyl chlorophyll special pair and subsequent electron acceptors. PSI consists of a core antenna complex that captures photons, and an electron transfer chain that converts photonic excitation into a charge separation. The cyanobacterial PSI reaction center is composed of one copy each of PsaA,B,C,D,E,F,I,J,K,L,M and X, and forms trimeric complexes. It depends on PSI electron transfer chain: 5 divinyl chlorophyll a, 1 divinyl chlorophyll a', 2 phylloquinones and 3 4Fe-4S clusters. PSI core antenna: 90 divinyl chlorophyll a, 22 carotenoids, 3 phospholipids and 1 galactolipid. P700 is a divinyl chlorophyll a/divinyl chlorophyll a' dimer, A0 is one or more divinyl chlorophyll a, A1 is one or both phylloquinones and FX is a shared 4Fe-4S iron-sulfur center. as a cofactor.

It is found in the cellular thylakoid membrane. The catalysed reaction is reduced [plastocyanin] + hnu + oxidized [2Fe-2S]-[ferredoxin] = oxidized [plastocyanin] + reduced [2Fe-2S]-[ferredoxin]. In terms of biological role, psaA and PsaB bind P700, the primary electron donor of photosystem I (PSI), as well as the electron acceptors A0, A1 and FX. PSI is a plastocyanin/cytochrome c6-ferredoxin oxidoreductase, converting photonic excitation into a charge separation, which transfers an electron from the donor P700 chlorophyll pair to the spectroscopically characterized acceptors A0, A1, FX, FA and FB in turn. Oxidized P700 is reduced on the lumenal side of the thylakoid membrane by plastocyanin or cytochrome c6. The protein is Photosystem I P700 chlorophyll a apoprotein A1 of Prochlorococcus marinus (strain NATL1A).